Consider the following 108-residue polypeptide: UPF0145 protein LACR_1006 (108 aa).

It belongs to the UPF0145 family.

The chain is UPF0145 protein LACR_1006 from Lactococcus lactis subsp. cremoris (strain SK11).